Consider the following 260-residue polypeptide: Sugar fermentation stimulation protein homolog (260 aa).

It belongs to the SfsA family.

In Chloroflexus aggregans (strain MD-66 / DSM 9485), this protein is Sugar fermentation stimulation protein homolog.